Reading from the N-terminus, the 290-residue chain is Shikimate kinase (290 aa).

Residue 81-91 coordinates ATP; that stretch reads PIASGLKSSSA.

Belongs to the GHMP kinase family. Archaeal shikimate kinase subfamily.

It localises to the cytoplasm. It catalyses the reaction shikimate + ATP = 3-phosphoshikimate + ADP + H(+). It participates in metabolic intermediate biosynthesis; chorismate biosynthesis; chorismate from D-erythrose 4-phosphate and phosphoenolpyruvate: step 5/7. This Methanocella arvoryzae (strain DSM 22066 / NBRC 105507 / MRE50) protein is Shikimate kinase.